A 79-amino-acid chain; its full sequence is UPF0154 protein llmg_1186 (79 aa).

The helical transmembrane segment at 4–24 (ILAILLMVVCLLAGFFLGTWF) threads the bilayer.

The protein belongs to the UPF0154 family.

Its subcellular location is the cell membrane. The sequence is that of UPF0154 protein llmg_1186 from Lactococcus lactis subsp. cremoris (strain MG1363).